The primary structure comprises 278 residues: Probable NADP-dependent mannitol dehydrogenase (278 aa).

NADP(+) contacts are provided by Ile45, Asn117, and Lys152. Active-site proton donor residues include Ser171 and Tyr186. NADP(+) contacts are provided by Tyr186, Lys190, and Thr220. Residue Lys190 is the Lowers pKa of active site Tyr of the active site.

It belongs to the short-chain dehydrogenases/reductases (SDR) family. In terms of assembly, homotetramer.

It carries out the reaction D-mannitol + NADP(+) = D-fructose + NADPH + H(+). Its function is as follows. Versatile oxidoreductase that catalyzes the oxidation and reduction of polar as well as non-polar substrates at a very broad pH range. Preferentially oxidizes secondary alcohols. Has highest activity for racemic 2-heptanol and racemic octanol. Is also an efficient reductase for selected substrates. Substrate selectivity was found for medium chain length ketones with the carbonyl function at position C-2. Has highest activities for ribulose and fructose. The enzyme is (R)-selective in the reduction direction and produces exclusively the (R)-enantiomer. The protein is Probable NADP-dependent mannitol dehydrogenase of Yarrowia lipolytica (strain CLIB 122 / E 150) (Yeast).